Consider the following 235-residue polypeptide: Orotidine 5'-phosphate decarboxylase (235 aa).

Residues Asp12, Lys34, 61 to 70 (DMKLLDIDNT), Thr116, Arg177, Gln186, and Arg207 contribute to the substrate site. The Proton donor role is filled by Lys63.

The protein belongs to the OMP decarboxylase family. Type 1 subfamily. In terms of assembly, homodimer.

The enzyme catalyses orotidine 5'-phosphate + H(+) = UMP + CO2. It participates in pyrimidine metabolism; UMP biosynthesis via de novo pathway; UMP from orotate: step 2/2. Catalyzes the decarboxylation of orotidine 5'-monophosphate (OMP) to uridine 5'-monophosphate (UMP). The sequence is that of Orotidine 5'-phosphate decarboxylase from Rhizobium etli (strain CIAT 652).